Reading from the N-terminus, the 487-residue chain is Sodium-coupled neutral amino acid symporter 1 (487 aa).

Residues 1 to 74 (MMHFKSGLEL…EYIPGTTSLG (74 aa)) lie on the Cytoplasmic side of the membrane. S6 carries the post-translational modification Phosphoserine. At T11 the chain carries Phosphothreonine. Phosphoserine occurs at positions 25, 28, 49, and 52. At T54 the chain carries Phosphothreonine. At S56 the chain carries Phosphoserine. A helical membrane pass occupies residues 75–97 (MSVFNLSNAIMGSGILGLAFALA). Residues 98 to 112 (NTGILLFLVLLTSVT) are Extracellular-facing. A helical membrane pass occupies residues 113–133 (LLSIYSINLLLICSKETGCMV). The Cytoplasmic segment spans residues 134–147 (YEKLGEQVFGTTGK). A helical membrane pass occupies residues 148-168 (FVIFGATSLQNTGAMLSYLFI). Topologically, residues 169-188 (VKNELPSAIKFLMGKEETFS) are extracellular. The helical transmembrane segment at 189–211 (AWYVDGRVLVVIVTFGIILPLCL) threads the bilayer. At 212-216 (LKNLG) the chain is on the cytoplasmic side. Residues 217 to 237 (YLGYTSGFSLSCMVFFLIVVI) traverse the membrane as a helical segment. At 238-275 (YKKFQIPCIVPELNSTISANSTNADTCTPKYVTLNSKT) the chain is on the extracellular side. A disulfide bridge links C245 with C264. N251 and N257 each carry an N-linked (GlcNAc...) asparagine glycan. A helical membrane pass occupies residues 276–296 (VYALPTIAFAFVCHPSVLPIY). The Cytoplasmic segment spans residues 297–312 (SELKDRSQKKMQMVSN). The helical transmembrane segment at 313-333 (ISFFAMFVMYFLTAIFGYLTF) threads the bilayer. Over 334 to 350 (YDNVQSDLLHKYQGKDD) the chain is Extracellular. Residues 351 to 371 (ILILTVRLAVIVAVILTVPVL) form a helical membrane-spanning segment. Residues 372–393 (FFTVRSSLFELAKKTKFNLCRH) lie on the Cytoplasmic side of the membrane. A helical membrane pass occupies residues 394–414 (TVVTCILLVVINLLVISIPSM). Residues 415-416 (KD) are Extracellular-facing. The helical transmembrane segment at 417 to 437 (IFGVVGVTSANMLIFILPSSL) threads the bilayer. Residues 438–452 (YLKITDQDGDKGTQR) are Cytoplasmic-facing. The chain crosses the membrane as a helical span at residues 453 to 473 (IWAALFLGLGVLFSLVSIPLV). The Extracellular portion of the chain corresponds to 474–487 (IYDWACSSSSDEGH).

This sequence belongs to the amino acid/polyamine transporter 2 family. Post-translationally, N-glycosylation plays an important role in the L-glutamine transport.

Its subcellular location is the cell membrane. It catalyses the reaction L-glutamine(in) + Na(+)(in) = L-glutamine(out) + Na(+)(out). The enzyme catalyses L-alanine(in) + Na(+)(in) = L-alanine(out) + Na(+)(out). The catalysed reaction is L-asparagine(in) + Na(+)(in) = L-asparagine(out) + Na(+)(out). It carries out the reaction L-histidine(in) + Na(+)(in) = L-histidine(out) + Na(+)(out). It catalyses the reaction L-serine(in) + Na(+)(in) = L-serine(out) + Na(+)(out). The enzyme catalyses L-cysteine(in) + Na(+)(in) = L-cysteine(out) + Na(+)(out). The catalysed reaction is L-methionine(in) + Na(+)(in) = L-methionine(out) + Na(+)(out). It carries out the reaction glycine(in) + Na(+)(in) = glycine(out) + Na(+)(out). It catalyses the reaction L-threonine(in) + Na(+)(in) = L-threonine(out) + Na(+)(out). The enzyme catalyses L-proline(in) + Na(+)(in) = L-proline(out) + Na(+)(out). Inhibited by alpha-(methylamino)isobutyric acid (MeAIB). Inhibited by lithium, potassium, choline ions, N-methylglucamine. The pH dependence has an allosteric effect on the transport. Symporter that cotransports short-chain neutral amino acids and sodium ions from the extraccellular to the intracellular side of the cell membrane. The transport is elctrogenic, pH dependent and driven by the Na(+) electrochemical gradient. Participates in the astroglia-derived glutamine transport into GABAergic interneurons for neurotransmitter GABA de novo synthesis. May also contributes to amino acid transport in placental trophoblast. Regulates synaptic plasticity. The chain is Sodium-coupled neutral amino acid symporter 1 from Pongo abelii (Sumatran orangutan).